The primary structure comprises 104 residues: MHPSEMQRKAPPRRRRHRNRAPLTHKMNKMVTSEQMKLPSTKKAEPPTWAQLKKLTQLATKYLENTKVTQTPESMLLAALMIVSMVSAGVPNSSEETATIENGP.

The segment at 1–48 is disordered; that stretch reads MHPSEMQRKAPPRRRRHRNRAPLTHKMNKMVTSEQMKLPSTKKAEPPT. Residues 10–20 show a composition bias toward basic residues; it reads APPRRRRHRNR. A Nuclear localization signal motif is present at residues 13–20; sequence RRRRHRNR. The Nuclear export signal motif lies at 49-58; it reads WAQLKKLTQL.

As to quaternary structure, forms homodimers, homotrimers, and homotetramers via a C-terminal domain. Associates with XPO1 and with ZNF145.

Its subcellular location is the cytoplasm. The protein localises to the nucleus. The protein resides in the nucleolus. Retroviral replication requires the nuclear export and translation of unspliced, singly-spliced and multiply-spliced derivatives of the initial genomic transcript. Rec interacts with a highly structured RNA element (RcRE) present in the viral 3'LTR and recruits the cellular nuclear export machinery. This permits export to the cytoplasm of unspliced genomic or incompletely spliced subgenomic viral transcripts. This is Endogenous retrovirus group K member 21 Rec protein (ERVK-21) from Homo sapiens (Human).